We begin with the raw amino-acid sequence, 154 residues long: Probable ubiquitin-conjugating enzyme E2 31 (154 aa).

The 146-residue stretch at 8–153 (KAAQRIAMEY…AREFTARHAN (146 aa)) folds into the UBC core domain. C91 (glycyl thioester intermediate) is an active-site residue.

The protein belongs to the ubiquitin-conjugating enzyme family.

It catalyses the reaction S-ubiquitinyl-[E1 ubiquitin-activating enzyme]-L-cysteine + [E2 ubiquitin-conjugating enzyme]-L-cysteine = [E1 ubiquitin-activating enzyme]-L-cysteine + S-ubiquitinyl-[E2 ubiquitin-conjugating enzyme]-L-cysteine.. It participates in protein modification; protein ubiquitination. Functionally, accepts the ubiquitin from the E1 complex and catalyzes its covalent attachment to other proteins. The polypeptide is Probable ubiquitin-conjugating enzyme E2 31 (UBC31) (Arabidopsis thaliana (Mouse-ear cress)).